The sequence spans 364 residues: MHLRRVKTMPRHSQSLTMAPYSSVSLVEQLEDRILCHEKTTAALVEHAFRIKDDIVSSLQKMQNKGGGDRLARLFLEEHIRNITAIVKQLNRDIEVLQEQIRARDNISYGTNSALKTLEMRQLSGLGDLRGRVARCDASIARLSAEHKSTYEGLQHLNKEQQAAKLILETKIKDAEGQISQLLSRVDLSISEQSTKLKMSHRDSNHQLQLLDTKFKGTVEELSNQILSARSWLQQEQERIEKELLQKIDHLSLIVKENSGANERDVEKKLSQMSARLDKIEESQKRNAEGQRKPDEEKVHGRISKLELQMTEDMKEMKAEVNAGFSAIYESIGSLRQVLEAKMKLDRDQLQKQIQQMQKPETAM.

Coiled coils occupy residues 75–107 (FLEE…RDNI), 158–189 (NKEQ…VDLS), and 261–287 (ANER…QKRN). Residues 281-300 (EESQKRNAEGQRKPDEEKVH) are disordered.

This sequence belongs to the FAM81 family. Interacts with DLG4/PSD-95, GRIN2B/GLUN2B and SYNGAP1; the interactions facilitate condensate formation. In terms of tissue distribution, expressed in most regions of the brain (at protein level).

Its subcellular location is the postsynaptic density. It localises to the cytoplasm. In terms of biological role, facilitates the interaction and assembly of proteins within the postsynaptic density by promoting the condensation of postsynaptic proteins via liquid-liquid phase separation. Required for neuronal activity. Accumulation at the postsynaptic density results in enlargement of dendritic spines. This chain is Protein FAM81A (Fam81a), found in Mus musculus (Mouse).